Here is a 515-residue protein sequence, read N- to C-terminus: Maturase K (515 aa).

The protein belongs to the intron maturase 2 family. MatK subfamily.

The protein localises to the plastid. It localises to the chloroplast. In terms of biological role, usually encoded in the trnK tRNA gene intron. Probably assists in splicing its own and other chloroplast group II introns. This is Maturase K from Alpinia zerumbet (Shell ginger).